The chain runs to 392 residues: Galactokinase (392 aa).

Glu33–Asp36 provides a ligand contact to substrate. Residues Ser67 and Gly129 to Ser135 each bind ATP. The Mg(2+) site is built by Ser135 and Glu167. The Proton acceptor role is filled by Asp179. Tyr229 lines the substrate pocket.

This sequence belongs to the GHMP kinase family. GalK subfamily.

The protein localises to the cytoplasm. The catalysed reaction is alpha-D-galactose + ATP = alpha-D-galactose 1-phosphate + ADP + H(+). It participates in carbohydrate metabolism; galactose metabolism. Its function is as follows. Catalyzes the transfer of the gamma-phosphate of ATP to D-galactose to form alpha-D-galactose-1-phosphate (Gal-1-P). In Limosilactobacillus reuteri (strain DSM 20016) (Lactobacillus reuteri), this protein is Galactokinase.